The chain runs to 443 residues: DNA primase DnaG (443 aa).

The Toprim domain occupies 169–243 (DSIIIVEGRA…DIDYVSRAPY (75 aa)). Residues Glu-175, Asp-217, and Asp-219 each coordinate Mg(2+).

Belongs to the archaeal DnaG primase family. Forms a ternary complex with MCM helicase and DNA. It depends on Mg(2+) as a cofactor.

It catalyses the reaction ssDNA + n NTP = ssDNA/pppN(pN)n-1 hybrid + (n-1) diphosphate.. Its function is as follows. RNA polymerase that catalyzes the synthesis of short RNA molecules used as primers for DNA polymerase during DNA replication. This is DNA primase DnaG from Methanococcus vannielii (strain ATCC 35089 / DSM 1224 / JCM 13029 / OCM 148 / SB).